The following is a 708-amino-acid chain: RUN and FYVE domain-containing protein 1 (708 aa).

A compositionally biased stretch (basic and acidic residues) spans 1 to 17 (MADREGGCAAGRGRELE). The interval 1 to 57 (MADREGGCAAGRGRELEPELEPGPGPGSALEPGEEFEIVDRSQLPGPGDLRSATRPR) is disordered. Residues 139 to 271 (DADHAPLQQF…LDANLCLKGE (133 aa)) enclose the RUN domain. Residues 321–374 (TVGDLQTKIDGLEKTNSKLQEELSAATDRICSLQEEQQQLREQNELIRERSEKS) adopt a coiled-coil conformation. Residues Y389 and Y400 each carry the phosphotyrosine modification. Positions 405–617 (KQLKEEKKVR…QALQEMGLHL (213 aa)) form a coiled coil. The interval 493 to 522 (QVMSSMKQMEERLQHSERARQGAEERSHKL) is disordered. Positions 500–522 (QMEERLQHSERARQGAEERSHKL) are enriched in basic and acidic residues. The tract at residues 615–625 (LHLSQSKLKME) is interaction with RAB4. Residue S620 is modified to Phosphoserine. The FYVE-type zinc-finger motif lies at 642 to 700 (DDEATHCRQCEKEFSISRRKHHCRNCGHIFCNTCSSNELALPSYPKPVRVCDSCHTLLL). Zn(2+) is bound by residues C648, C651, C664, C667, C672, C675, C692, and C695.

Self-assembles through coiled coil domains to drive ELVA (endo-lysosomal vesicular assembly) formation. Interacts with BMX. May interact with SSB. Interacts with RAB4 and RAB5 that have been activated by GTP-binding. Interacts WITH RAB14 and RAB4B (GTP-bound form); the interactions allow endosomal tethering and fusion. Interacts with ARL8B (GTP-bound form); the interaction is required for RUFY1 endosomal location and promotes interaction with RAB14. Phosphorylation on Tyr-389 and/or Tyr-400 is required for interaction with BMX and endosomal targeting. As to expression, broadly expressed, with highest levels in lung, testis, kidney and brain.

The protein resides in the early endosome membrane. Functionally, activating adapter involved in cargo sorting from early/recycling endosomes. Regulates retrieval of proteins from endosomes to the trans-Golgi network through interaction with the dynein-dynactin complex. Dual effector of RAB4B and RAB14, mediates a cooperative interaction allowing endosomal tethering and fusion. Binds phospholipid vesicles containing phosphatidylinositol 3-phosphate and participates in early endosomal trafficking. In oocytes, self-assembles to form a protein matrix which hold together endolysosomes, autophagosomes and proteasomes and generate non-membrane-bound compartments called endo-lysosomal vesicular assemblies (ELVAs). In immature oocytes, ELVAs sequester ubiquitinated protein aggregates and degrade them upon oocyte maturation. The protein is RUN and FYVE domain-containing protein 1 of Homo sapiens (Human).